A 215-amino-acid chain; its full sequence is N-(5'-phosphoribosyl)anthranilate isomerase (215 aa).

It belongs to the TrpF family.

It carries out the reaction N-(5-phospho-beta-D-ribosyl)anthranilate = 1-(2-carboxyphenylamino)-1-deoxy-D-ribulose 5-phosphate. It functions in the pathway amino-acid biosynthesis; L-tryptophan biosynthesis; L-tryptophan from chorismate: step 3/5. This Chlorobium phaeobacteroides (strain DSM 266 / SMG 266 / 2430) protein is N-(5'-phosphoribosyl)anthranilate isomerase.